Reading from the N-terminus, the 218-residue chain is Adenylate kinase (218 aa).

10 to 15 (GAGKGT) serves as a coordination point for ATP. An NMP region spans residues 30–59 (STGDMLRAAVQAQTPVGIEAKKVMDAGKLV). AMP-binding positions include Thr-31, Arg-36, 57 to 59 (KLV), 85 to 88 (GFPR), and Gln-92. The LID stretch occupies residues 122–159 (GRRVHLSSGRTYHVRFNPPKKEGLDDLTGEPLVQREDD). ATP is bound by residues Arg-123 and 132–133 (TY). Positions 156 and 167 each coordinate AMP. Gly-203 provides a ligand contact to ATP.

It belongs to the adenylate kinase family. Monomer.

The protein resides in the cytoplasm. It carries out the reaction AMP + ATP = 2 ADP. The protein operates within purine metabolism; AMP biosynthesis via salvage pathway; AMP from ADP: step 1/1. Catalyzes the reversible transfer of the terminal phosphate group between ATP and AMP. Plays an important role in cellular energy homeostasis and in adenine nucleotide metabolism. This is Adenylate kinase from Chlorobium phaeobacteroides (strain DSM 266 / SMG 266 / 2430).